The chain runs to 129 residues: Sigma factor-binding protein Crl (129 aa).

Residues threonine 99 to valine 119 form an essential for activity region.

This sequence belongs to the Crl family.

The protein localises to the cytoplasm. Its function is as follows. Binds to the sigma-S subunit of RNA polymerase, activating expression of sigma-S-regulated genes. Stimulates RNA polymerase holoenzyme formation and may bind to several other sigma factors, such as sigma-70 and sigma-32. In Vibrio vulnificus (strain CMCP6), this protein is Sigma factor-binding protein Crl.